Reading from the N-terminus, the 395-residue chain is Cyclomarin C epoxidase CymV (395 aa).

This sequence belongs to the cytochrome P450 family.

Cytochrome P450; part of the gene cluster that mediates the biosynthesis of cyclic heptapeptides, known as cyclomarins and also of cyclic dipeptides, called cyclomarazines, which have both antimicrobial and cytotoxic effects. First, CymD catalyzes the reverse N-prenylation of monomeric L-tryptophan with dimethylallyl diphosphate (DMAPP) to form N-(1,1-dimethylallyl)-tryptophan (r-N-DMAT). The N-(1,1-dimethylallyl)-tryptophan produced by CymD is then combined with a range of standard and nonproteinogenic amino acid substrates to synthesize the peptides, a process that is probably catalyzed by the non-canonical nonribosomal peptide synthetase (NRPS), CymA. Other proteins in the cluster catalyze further modifications of the peptides including CymV which catalyzes the oxidation of olefinic cyclomarins and cyclomarazines to their respective epoxide derivatives. This chain is Cyclomarin C epoxidase CymV, found in Salinispora arenicola (strain CNS-205).